We begin with the raw amino-acid sequence, 670 residues long: tRNA 5-methylaminomethyl-2-thiouridine biosynthesis bifunctional protein MnmC (670 aa).

Positions 1-242 (MTFSVQHAEI…KRECLSGLKI (242 aa)) are tRNA (mnm(5)s(2)U34)-methyltransferase. The tract at residues 269–670 (IGGGIASLCA…KKWLKGSKVE (402 aa)) is FAD-dependent cmnm(5)s(2)U34 oxidoreductase.

The protein in the N-terminal section; belongs to the methyltransferase superfamily. tRNA (mnm(5)s(2)U34)-methyltransferase family. This sequence in the C-terminal section; belongs to the DAO family. FAD is required as a cofactor.

Its subcellular location is the cytoplasm. It carries out the reaction 5-aminomethyl-2-thiouridine(34) in tRNA + S-adenosyl-L-methionine = 5-methylaminomethyl-2-thiouridine(34) in tRNA + S-adenosyl-L-homocysteine + H(+). Functionally, catalyzes the last two steps in the biosynthesis of 5-methylaminomethyl-2-thiouridine (mnm(5)s(2)U) at the wobble position (U34) in tRNA. Catalyzes the FAD-dependent demodification of cmnm(5)s(2)U34 to nm(5)s(2)U34, followed by the transfer of a methyl group from S-adenosyl-L-methionine to nm(5)s(2)U34, to form mnm(5)s(2)U34. In Haemophilus influenzae (strain PittEE), this protein is tRNA 5-methylaminomethyl-2-thiouridine biosynthesis bifunctional protein MnmC.